Consider the following 353-residue polypeptide: Deoxyhypusine synthase (353 aa).

NAD(+) is bound by residues 90-94 (SNLIS), 116-118 (TAG), Glu122, and Asp228. 121-122 (EE) is a binding site for spermidine. Asp233 contacts spermidine. Gly275 contributes to the NAD(+) binding site. His280 contributes to the spermidine binding site. An NAD(+)-binding site is contributed by 300-301 (TA). Residues 306 to 308 (GSD) and 315 to 321 (EAVSWGK) contribute to the spermidine site. The active-site Nucleophile is the Lys321. Residue 334–335 (EA) participates in NAD(+) binding.

It belongs to the deoxyhypusine synthase family. Homotetramer. It depends on NAD(+) as a cofactor.

It catalyses the reaction [eIF5A protein]-L-lysine + spermidine = [eIF5A protein]-deoxyhypusine + propane-1,3-diamine. It participates in protein modification; eIF5A hypusination. In terms of biological role, catalyzes the NAD-dependent oxidative cleavage of spermidine and the subsequent transfer of the butylamine moiety of spermidine to the epsilon-amino group of a specific lysine residue of the eIF-5A precursor protein to form the intermediate deoxyhypusine residue. This is Deoxyhypusine synthase (dys-1) from Neurospora crassa (strain ATCC 24698 / 74-OR23-1A / CBS 708.71 / DSM 1257 / FGSC 987).